Here is an 801-residue protein sequence, read N- to C-terminus: MKFNQFAHVKVPFEQKLAELNRIAFLHAGDEDLASNHIYRLFLERAFPNFKTEAAKNHALSNLAATENADILTYLNSSKINARVFYAVGLQLLGFEAELDFDLKDPFSAMDKLNLPYQKEIHHRDDVINAWYDLLCTSTKKGQNLLDILANRGYFTQFYQLNLTEPIFFNGKAQPVFDTNKLIHEVVYVESELDTDQDGKRDLLKVIITRPAMTDNGMKVPTIFTASPYYLGTNDASAEKMMHSVDLPITRKEVKPLSYQDIEYHKPETKLPKKRPVVISTKNAEESWEHLFTYTFNDYMLARGFAVVYSGGVGTLDSDGYRTCGDEAETLGAKDVVEWLNGKRTAFTTKEANKAIPAWWSNGKVAMTGKSYLGTLATAAATTGVAGLETIISEAAISSWYDYYREGGLVIAPGGFPGEDADILAEECFSRQKSAGDYNHSKDGFNKFLSTITKDQDRTTGNYNTFWDARNYLKDVGNIKCDIVMVHGLNDWNVKLKNVFNLYNKLGDVEVTKKLILHQGQHIYINNFQSLDFTDMMNLWLSHKLYGVENNAKELLPDILVQNNTKESTWETYSSWQSKNFTKLYLNSDSLSAQKKENQTLEFSDHLPETTFKHYQTDIANWKEEILASTSPKLETNRLILTSKPLKHETLLKGVAKIKLKIASQLDHGLVSVKLVDYGDAKRLGATPTILERRGLDLGYHWKEDNLVEFKLAKETPFKMITQAHLNLQNRHNDFSTDELEANKFYDVEITTQPMFYHLPKGHKLGLVIYATDMEMTLQGNEENSYRIDTTGSYCLLPIEE.

Active-site charge relay system residues include Ser-371, Asp-491, and His-522.

This sequence belongs to the peptidase S15 family. In terms of assembly, homodimer.

The protein resides in the cytoplasm. The enzyme catalyses Hydrolyzes Xaa-Pro-|- bonds to release unblocked, N-terminal dipeptides from substrates including Ala-Pro-|-p-nitroanilide and (sequentially) Tyr-Pro-|-Phe-Pro-|-Gly-Pro-|-Ile.. Functionally, removes N-terminal dipeptides sequentially from polypeptides having unsubstituted N-termini provided that the penultimate residue is proline. This chain is Xaa-Pro dipeptidyl-peptidase, found in Ligilactobacillus salivarius (strain UCC118) (Lactobacillus salivarius).